A 196-amino-acid chain; its full sequence is ATP-dependent Clp protease proteolytic subunit (196 aa).

The active-site Nucleophile is serine 98. Histidine 123 is an active-site residue.

Belongs to the peptidase S14 family. Fourteen ClpP subunits assemble into 2 heptameric rings which stack back to back to give a disk-like structure with a central cavity, resembling the structure of eukaryotic proteasomes.

The protein localises to the cytoplasm. It catalyses the reaction Hydrolysis of proteins to small peptides in the presence of ATP and magnesium. alpha-casein is the usual test substrate. In the absence of ATP, only oligopeptides shorter than five residues are hydrolyzed (such as succinyl-Leu-Tyr-|-NHMec, and Leu-Tyr-Leu-|-Tyr-Trp, in which cleavage of the -Tyr-|-Leu- and -Tyr-|-Trp bonds also occurs).. In terms of biological role, cleaves peptides in various proteins in a process that requires ATP hydrolysis. Has a chymotrypsin-like activity. Plays a major role in the degradation of misfolded proteins. The sequence is that of ATP-dependent Clp protease proteolytic subunit from Limosilactobacillus fermentum (strain NBRC 3956 / LMG 18251) (Lactobacillus fermentum).